A 250-amino-acid chain; its full sequence is Ribosomal RNA small subunit methyltransferase J (250 aa).

S-adenosyl-L-methionine contacts are provided by residues 102 to 103 (RD), 118 to 119 (ER), 154 to 155 (SS), and D172.

It belongs to the methyltransferase superfamily. RsmJ family.

Its subcellular location is the cytoplasm. It catalyses the reaction guanosine(1516) in 16S rRNA + S-adenosyl-L-methionine = N(2)-methylguanosine(1516) in 16S rRNA + S-adenosyl-L-homocysteine + H(+). Functionally, specifically methylates the guanosine in position 1516 of 16S rRNA. The polypeptide is Ribosomal RNA small subunit methyltransferase J (Edwardsiella ictaluri (strain 93-146)).